The chain runs to 160 residues: Cytochrome b6-f complex subunit 4 (160 aa).

Residues 1–35 (MATLKKPDLSDPKLRAKLAKGMGHNYYGEPAWPND) are Cytoplasmic-facing. The helical transmembrane segment at 36-56 (LLYVFPVVIMGTFACIVALSV) threads the bilayer. At 57–94 (LDPAMVGEPADPFATPLEILPEWYLYPVFQILRSVPNK) the chain is on the lumenal, thylakoid side. The helical transmembrane segment at 95 to 115 (LLGVLLMASVPLGLILVPFIE) threads the bilayer. Residues 116 to 130 (NVNKFQNPFRRPVAT) lie on the Cytoplasmic side of the membrane. A helical transmembrane segment spans residues 131 to 151 (TIFLFGTLVTIWLGIGATFPL). Residues 152–160 (DKTLTLGLF) are Lumenal, thylakoid-facing.

Belongs to the cytochrome b family. PetD subfamily. As to quaternary structure, the 4 large subunits of the cytochrome b6-f complex are cytochrome b6, subunit IV (17 kDa polypeptide, PetD), cytochrome f and the Rieske protein, while the 4 small subunits are PetG, PetL, PetM and PetN. The complex functions as a dimer.

It localises to the cellular thylakoid membrane. In terms of biological role, component of the cytochrome b6-f complex, which mediates electron transfer between photosystem II (PSII) and photosystem I (PSI), cyclic electron flow around PSI, and state transitions. The chain is Cytochrome b6-f complex subunit 4 from Mastigocladus laminosus (Fischerella sp.).